Here is a 174-residue protein sequence, read N- to C-terminus: MIRLSAAAALGLAAALAASPALAQTSATAVVKAGDGKDAGAVTVTEAPHGVLLKLELKGLTPGWHAAHFHEKGDCGTPDFKSAGAHVHTAATTVHGLLNPDANDSGDLPNIFAAADGAATAEIYSPLVSLKGAGGRPALLDADGSSIVVHANPDDHKTQPIGGAGARVACGVIK.

Residues 1 to 23 (MIRLSAAAALGLAAALAASPALA) form the signal peptide. The Cu cation site is built by histidine 68, histidine 70, and histidine 86. Cysteines 75 and 170 form a disulfide. Zn(2+) contacts are provided by histidine 86, histidine 95, aspartate 104, and aspartate 107. Histidine 150 contacts Cu cation.

Belongs to the Cu-Zn superoxide dismutase family. In terms of assembly, homodimer. Cu cation serves as cofactor. It depends on Zn(2+) as a cofactor.

It localises to the periplasm. The catalysed reaction is 2 superoxide + 2 H(+) = H2O2 + O2. Its function is as follows. Destroys radicals which are normally produced within the cells and which are toxic to biological systems. May function against extracytoplasmic toxic oxygen species. The protein is Superoxide dismutase [Cu-Zn] (sodC) of Caulobacter vibrioides (strain ATCC 19089 / CIP 103742 / CB 15) (Caulobacter crescentus).